The following is a 209-amino-acid chain: Small ribosomal subunit protein uS5 (209 aa).

The S5 DRBM domain occupies 48–111; sequence LEDEVLDINM…DAAKLNITYI (64 aa).

This sequence belongs to the universal ribosomal protein uS5 family. As to quaternary structure, part of the 30S ribosomal subunit. Contacts protein S4.

With S4 and S12 plays an important role in translational accuracy. In Methanosarcina acetivorans (strain ATCC 35395 / DSM 2834 / JCM 12185 / C2A), this protein is Small ribosomal subunit protein uS5.